A 184-amino-acid polypeptide reads, in one-letter code: Putative lyase MJ0807 (184 aa).

This sequence belongs to the chorismate pyruvate-lyase type 2 family.

The protein is Putative lyase MJ0807 of Methanocaldococcus jannaschii (strain ATCC 43067 / DSM 2661 / JAL-1 / JCM 10045 / NBRC 100440) (Methanococcus jannaschii).